We begin with the raw amino-acid sequence, 835 residues long: Protein translocase subunit SecA (835 aa).

ATP is bound by residues Gln-85, 103–107, and Asp-492; that span reads GEGKT. Positions 819, 821, 830, and 831 each coordinate Zn(2+).

It belongs to the SecA family. As to quaternary structure, monomer and homodimer. Part of the essential Sec protein translocation apparatus which comprises SecA, SecYEG and auxiliary proteins SecDF. Other proteins may also be involved. It depends on Zn(2+) as a cofactor.

It localises to the cell membrane. Its subcellular location is the cytoplasm. The enzyme catalyses ATP + H2O + cellular proteinSide 1 = ADP + phosphate + cellular proteinSide 2.. Part of the Sec protein translocase complex. Interacts with the SecYEG preprotein conducting channel. Has a central role in coupling the hydrolysis of ATP to the transfer of proteins into and across the cell membrane, serving as an ATP-driven molecular motor driving the stepwise translocation of polypeptide chains across the membrane. This Clostridium botulinum (strain Kyoto / Type A2) protein is Protein translocase subunit SecA.